The following is a 175-amino-acid chain: SsrA-binding protein (175 aa).

The protein belongs to the SmpB family.

It is found in the cytoplasm. Functionally, required for rescue of stalled ribosomes mediated by trans-translation. Binds to transfer-messenger RNA (tmRNA), required for stable association of tmRNA with ribosomes. tmRNA and SmpB together mimic tRNA shape, replacing the anticodon stem-loop with SmpB. tmRNA is encoded by the ssrA gene; the 2 termini fold to resemble tRNA(Ala) and it encodes a 'tag peptide', a short internal open reading frame. During trans-translation Ala-aminoacylated tmRNA acts like a tRNA, entering the A-site of stalled ribosomes, displacing the stalled mRNA. The ribosome then switches to translate the ORF on the tmRNA; the nascent peptide is terminated with the 'tag peptide' encoded by the tmRNA and targeted for degradation. The ribosome is freed to recommence translation, which seems to be the essential function of trans-translation. The polypeptide is SsrA-binding protein (Prochlorococcus marinus subsp. pastoris (strain CCMP1986 / NIES-2087 / MED4)).